Here is a 947-residue protein sequence, read N- to C-terminus: Protein translocase subunit SecA (947 aa).

ATP is bound by residues glutamine 85, 103 to 107, and aspartate 514; that span reads GEGKT. The disordered stretch occupies residues 864–947; the sequence is AAPSLDKGAQ…QAKGGRRRKK (84 aa). The span at 884–900 shows a compositional bias: basic and acidic residues; it reads PEIRAKGLDAPQRRDLH. Basic residues predominate over residues 934–947; it reads ERRKQAKGGRRRKK.

This sequence belongs to the SecA family. Monomer and homodimer. Part of the essential Sec protein translocation apparatus which comprises SecA, SecYEG and auxiliary proteins SecDF. Other proteins may also be involved.

It is found in the cell membrane. Its subcellular location is the cytoplasm. It carries out the reaction ATP + H2O + cellular proteinSide 1 = ADP + phosphate + cellular proteinSide 2.. Functionally, part of the Sec protein translocase complex. Interacts with the SecYEG preprotein conducting channel. Has a central role in coupling the hydrolysis of ATP to the transfer of proteins into and across the cell membrane, serving as an ATP-driven molecular motor driving the stepwise translocation of polypeptide chains across the membrane. The chain is Protein translocase subunit SecA from Streptomyces lividans.